The primary structure comprises 371 residues: Cytochrome b (371 aa).

Helical transmembrane passes span 25–45 (FGSM…FLAV), 69–90 (WMVQ…YIHI), 105–125 (WLSG…GYVL), and 170–190 (FFAL…LHVL). Heme b is bound by residues histidine 75 and histidine 89. Residues histidine 174 and histidine 188 each contribute to the heme b site. A ubiquinone is bound at residue histidine 193. 4 helical membrane passes run 218–238 (MKDL…ISFF), 280–300 (LGGA…PFIH), 312–332 (LMQL…WAAT), and 339–358 (FISI…ISNP).

Belongs to the cytochrome b family. The cytochrome bc1 complex contains 3 respiratory subunits (MT-CYB, CYC1 and UQCRFS1), 2 core proteins (UQCRC1 and UQCRC2) and probably 6 low-molecular weight proteins. Requires heme b as cofactor.

It is found in the mitochondrion inner membrane. Component of the ubiquinol-cytochrome c reductase complex (complex III or cytochrome b-c1 complex) that is part of the mitochondrial respiratory chain. The b-c1 complex mediates electron transfer from ubiquinol to cytochrome c. Contributes to the generation of a proton gradient across the mitochondrial membrane that is then used for ATP synthesis. In Boa constrictor (Boa), this protein is Cytochrome b (MT-CYB).